Consider the following 304-residue polypeptide: Coenzyme PQQ synthesis protein B (304 aa).

It belongs to the PqqB family.

The protein operates within cofactor biosynthesis; pyrroloquinoline quinone biosynthesis. In terms of biological role, may be involved in the transport of PQQ or its precursor to the periplasm. The chain is Coenzyme PQQ synthesis protein B from Pseudomonas paraeruginosa (strain DSM 24068 / PA7) (Pseudomonas aeruginosa (strain PA7)).